A 398-amino-acid polypeptide reads, in one-letter code: Probable peptidoglycan glycosyltransferase FtsW (398 aa).

Residues 1–25 (MCYGGTAMMAFADIKEALTPKPSAQ) are Cytoplasmic-facing. A helical transmembrane segment spans residues 26–46 (LYDVPLLYCMLMLMGVGFVMV). Residues 47–69 (TSASMPTADRLFGNIYHFTIRHG) are Periplasmic-facing. A helical transmembrane segment spans residues 70–90 (IFLALSFCLFWITTSVPMSWW). Lys-91 is a topological domain (cytoplasmic). The helical transmembrane segment at 92-112 (KANPYLLLVGLGLLLIVLIVG) threads the bilayer. Residues 113-120 (REVNGSTR) lie on the Periplasmic side of the membrane. A helical membrane pass occupies residues 121–141 (WIPIGPFNIQASELAKLFFFS). At 142–156 (YISGYLVRKRSEVQE) the chain is on the cytoplasmic side. The chain crosses the membrane as a helical span at residues 157-177 (NIKGFIKPILVFAAYAGLILM). Residues 178–179 (QP) are Periplasmic-facing. The helical transmembrane segment at 180-200 (DLGTVVVMFVTTVGLLFLAGA) threads the bilayer. Lys-201 is a topological domain (cytoplasmic). Residues 202–222 (LWQFFVLILTGVALVIGLIVL) form a helical membrane-spanning segment. The Periplasmic portion of the chain corresponds to 223–289 (EPYRMARVIG…DFIFAVIAEE (67 aa)). The helical transmembrane segment at 290 to 312 (LGFVGVSSILIVLGTLVFRALLI) threads the bilayer. The Cytoplasmic portion of the chain corresponds to 313–324 (GQNALKNGKEYE). Residues 325 to 345 (GYLALAIGIWFAFQTMVNVGA) form a helical membrane-spanning segment. The Periplasmic portion of the chain corresponds to 346-356 (SAGILPTKGLT). Residues 357 to 377 (LPFISYGGSSLLMMTIAAGIL) traverse the membrane as a helical segment. Topologically, residues 378–398 (LRVDFETKMATKQATSGGAKR) are cytoplasmic.

This sequence belongs to the SEDS family. FtsW subfamily.

Its subcellular location is the cell inner membrane. It carries out the reaction [GlcNAc-(1-&gt;4)-Mur2Ac(oyl-L-Ala-gamma-D-Glu-L-Lys-D-Ala-D-Ala)](n)-di-trans,octa-cis-undecaprenyl diphosphate + beta-D-GlcNAc-(1-&gt;4)-Mur2Ac(oyl-L-Ala-gamma-D-Glu-L-Lys-D-Ala-D-Ala)-di-trans,octa-cis-undecaprenyl diphosphate = [GlcNAc-(1-&gt;4)-Mur2Ac(oyl-L-Ala-gamma-D-Glu-L-Lys-D-Ala-D-Ala)](n+1)-di-trans,octa-cis-undecaprenyl diphosphate + di-trans,octa-cis-undecaprenyl diphosphate + H(+). It functions in the pathway cell wall biogenesis; peptidoglycan biosynthesis. In terms of biological role, peptidoglycan polymerase that is essential for cell division. In Pseudoalteromonas translucida (strain TAC 125), this protein is Probable peptidoglycan glycosyltransferase FtsW.